We begin with the raw amino-acid sequence, 411 residues long: Arginase (411 aa).

Residues N83–N106 are disordered. The Mn(2+) site is built by H193, D216, H218, and D220. The L-arginine site is built by N222, S229, and D274. Residues D323 and D325 each coordinate Mn(2+).

This sequence belongs to the arginase family. Homotrimer; oligomerization is dependent on Mn(2+) binding. Mn(2+) is required as a cofactor.

It carries out the reaction L-arginine + H2O = urea + L-ornithine. It participates in nitrogen metabolism; urea cycle; L-ornithine and urea from L-arginine: step 1/1. With respect to regulation, feedback inhibition by product L-ornithine,. Inhibited by 2(S)-amino-6-boronohexanoic acid (ABH); however, with less efficiency than human ARG1. Functionally, catalyzes the hydrolysis of L-arginine into urea and L-ornithine, which is a precursor for polyamine biosynthesis. May play a role in parasite intra-hepatic development during the host liver stage. The polypeptide is Arginase (Plasmodium falciparum (isolate 3D7)).